Consider the following 185-residue polypeptide: Ribosome-recycling factor (185 aa).

This sequence belongs to the RRF family.

It is found in the cytoplasm. Its function is as follows. Responsible for the release of ribosomes from messenger RNA at the termination of protein biosynthesis. May increase the efficiency of translation by recycling ribosomes from one round of translation to another. The chain is Ribosome-recycling factor from Legionella pneumophila (strain Paris).